A 1162-amino-acid polypeptide reads, in one-letter code: ATP-dependent helicase/deoxyribonuclease subunit B (1162 aa).

The region spanning 1–275 (MELNAYIGRA…QFFKQQYRFN (275 aa)) is the UvrD-like helicase ATP-binding domain. Residue 8–15 (GRAGTGKS) coordinates ATP. Positions 269 to 583 (KQQYRFNNKD…SIGTMDLAKV (315 aa)) constitute a UvrD-like helicase C-terminal domain. The [4Fe-4S] cluster site is built by Cys-784, Cys-1117, Cys-1120, and Cys-1126.

This sequence belongs to the helicase family. AddB/RexB type 1 subfamily. As to quaternary structure, heterodimer of AddA and AddB. The cofactor is Mg(2+). It depends on [4Fe-4S] cluster as a cofactor.

Functionally, the heterodimer acts as both an ATP-dependent DNA helicase and an ATP-dependent, dual-direction single-stranded exonuclease. Recognizes the chi site generating a DNA molecule suitable for the initiation of homologous recombination. The AddB subunit has 5' -&gt; 3' nuclease activity but not helicase activity. This Staphylococcus haemolyticus (strain JCSC1435) protein is ATP-dependent helicase/deoxyribonuclease subunit B.